The following is a 401-amino-acid chain: MIIKPKIRGFICTTTHPVGCEANVQEQITFTKNKGKIANGPKKVLVVGSSSGYGLSSRIAAAFGCDAATIGVFFEKPGTETKPGTAGWYNSAAFDKFAKAEGLYSKSINCDAFSHEAKQKVIELIKQDLGEIDMVVYSLASPVRRLPDSGEVIRSALKPIGETYTATAVDTNKDCIIEATVEPATEQEIADTVTVMGGQDWELWIKALSEAGVLANNCKTVAYSYIGTELTWPIYWHGALGKAKMDLDRAAKALNDQLSATGGSANVAVLKSVVTQASSAIPVMPLYIAMVFKKMRQEGLHEGCMEQIYRMFSERLYRTDGAKPETDSDNRLRLDDWELRDDIQQHCRDLWPQVTTENLSELTDYREYKAEFIKLFGFGIEGIDYDADVNPYVEFDVIELQ.

Residues 48 to 53 (GSSSGY), 74 to 75 (FE), 111 to 112 (DA), and 139 to 140 (LA) each bind NAD(+). A substrate-binding site is contributed by tyrosine 225. The active-site Proton donor is the tyrosine 235. NAD(+) contacts are provided by residues lysine 244 and 273–275 (VVT).

The protein belongs to the TER reductase family. As to quaternary structure, monomer.

The catalysed reaction is a 2,3-saturated acyl-[ACP] + NAD(+) = a (2E)-enoyl-[ACP] + NADH + H(+). The protein operates within lipid metabolism; fatty acid biosynthesis. Functionally, involved in the final reduction of the elongation cycle of fatty acid synthesis (FAS II). Catalyzes the reduction of a carbon-carbon double bond in an enoyl moiety that is covalently linked to an acyl carrier protein (ACP). The protein is Enoyl-[acyl-carrier-protein] reductase [NADH] of Shewanella putrefaciens (strain CN-32 / ATCC BAA-453).